A 390-amino-acid polypeptide reads, in one-letter code: Heat stress transcription factor B-2b (390 aa).

Residues 165 to 212 are disordered; sequence TRDGSPVLSGEEQVISSSSSPEPPLVLPQAPSGSGSGGVASGDVGDEN. Residues 206–237 are a coiled coil; sequence GDVGDENERLRRENAQLARELSQMRKLCNNIL. Residues 215–244 are hydrophobic repeat HR-A/B; sequence LRRENAQLARELSQMRKLCNNILLLMSKYA. The Nuclear localization signal motif lies at 318–322; it reads RKRMR. The interval 322-363 is disordered; sequence RHDGGGDDDHAATVKAEPMDGRPHGKDEQSAETQAWPIYRPR. Positions 323 to 350 are enriched in basic and acidic residues; it reads HDGGGDDDHAATVKAEPMDGRPHGKDEQ.

Belongs to the HSF family. Class B subfamily. In terms of assembly, homotrimer. Exhibits temperature-dependent phosphorylation.

It is found in the nucleus. In terms of biological role, transcriptional regulator that specifically binds DNA of heat shock promoter elements (HSE). This chain is Heat stress transcription factor B-2b (HSFB2B), found in Oryza sativa subsp. japonica (Rice).